The primary structure comprises 293 residues: Aminodeoxychorismate lyase (293 aa).

At lysine 146 the chain carries N6-(pyridoxal phosphate)lysine.

The protein belongs to the class-IV pyridoxal-phosphate-dependent aminotransferase family. As to quaternary structure, homodimer. The cofactor is pyridoxal 5'-phosphate.

It catalyses the reaction 4-amino-4-deoxychorismate = 4-aminobenzoate + pyruvate + H(+). The protein operates within cofactor biosynthesis; tetrahydrofolate biosynthesis; 4-aminobenzoate from chorismate: step 2/2. In terms of biological role, involved in the biosynthesis of p-aminobenzoate (PABA), a precursor of tetrahydrofolate. Converts 4-amino-4-deoxychorismate into 4-aminobenzoate (PABA) and pyruvate. This chain is Aminodeoxychorismate lyase, found in Bacillus subtilis (strain 168).